Here is a 406-residue protein sequence, read N- to C-terminus: Exodeoxyribonuclease 7 large subunit (406 aa).

The protein belongs to the XseA family. As to quaternary structure, heterooligomer composed of large and small subunits.

It localises to the cytoplasm. It catalyses the reaction Exonucleolytic cleavage in either 5'- to 3'- or 3'- to 5'-direction to yield nucleoside 5'-phosphates.. Its function is as follows. Bidirectionally degrades single-stranded DNA into large acid-insoluble oligonucleotides, which are then degraded further into small acid-soluble oligonucleotides. This is Exodeoxyribonuclease 7 large subunit from Desulfitobacterium hafniense (strain Y51).